The chain runs to 140 residues: MAKQIKGVLGKKLGMTQVFDADNRMVPVTVVEAGPCVVTRVRTPEKDGYSAVQLGFGQIDPRKVNKPLGDYLRKHEITPRRYFTEIRTDDASEYTIGQEVLADTFEAGQFVDVTGKSKGKGFAGVMKRHGFGGLGASHGT.

This sequence belongs to the universal ribosomal protein uL3 family. In terms of assembly, part of the 50S ribosomal subunit. Forms a cluster with proteins L14 and L19.

Functionally, one of the primary rRNA binding proteins, it binds directly near the 3'-end of the 23S rRNA, where it nucleates assembly of the 50S subunit. This chain is Large ribosomal subunit protein uL3 (rplC), found in Planobispora rosea.